The following is a 347-amino-acid chain: Phosphoribosylformylglycinamidine cyclo-ligase (347 aa).

The protein belongs to the AIR synthase family.

It is found in the cytoplasm. The catalysed reaction is 2-formamido-N(1)-(5-O-phospho-beta-D-ribosyl)acetamidine + ATP = 5-amino-1-(5-phospho-beta-D-ribosyl)imidazole + ADP + phosphate + H(+). It functions in the pathway purine metabolism; IMP biosynthesis via de novo pathway; 5-amino-1-(5-phospho-D-ribosyl)imidazole from N(2)-formyl-N(1)-(5-phospho-D-ribosyl)glycinamide: step 2/2. The protein is Phosphoribosylformylglycinamidine cyclo-ligase of Prochlorococcus marinus (strain MIT 9215).